We begin with the raw amino-acid sequence, 396 residues long: Phosphoglycerate kinase (396 aa).

Substrate contacts are provided by residues D21 to N23, R36, H59 to R62, R118, and R151. ATP contacts are provided by residues K201, E323, and G353–T356.

This sequence belongs to the phosphoglycerate kinase family. As to quaternary structure, monomer.

It localises to the cytoplasm. The enzyme catalyses (2R)-3-phosphoglycerate + ATP = (2R)-3-phospho-glyceroyl phosphate + ADP. It functions in the pathway carbohydrate degradation; glycolysis; pyruvate from D-glyceraldehyde 3-phosphate: step 2/5. The polypeptide is Phosphoglycerate kinase (Granulibacter bethesdensis (strain ATCC BAA-1260 / CGDNIH1)).